A 957-amino-acid polypeptide reads, in one-letter code: Glycine dehydrogenase (decarboxylating) (957 aa).

Position 708 is an N6-(pyridoxal phosphate)lysine (lysine 708).

It belongs to the GcvP family. The glycine cleavage system is composed of four proteins: P, T, L and H. The cofactor is pyridoxal 5'-phosphate.

The catalysed reaction is N(6)-[(R)-lipoyl]-L-lysyl-[glycine-cleavage complex H protein] + glycine + H(+) = N(6)-[(R)-S(8)-aminomethyldihydrolipoyl]-L-lysyl-[glycine-cleavage complex H protein] + CO2. The glycine cleavage system catalyzes the degradation of glycine. The P protein binds the alpha-amino group of glycine through its pyridoxal phosphate cofactor; CO(2) is released and the remaining methylamine moiety is then transferred to the lipoamide cofactor of the H protein. The protein is Glycine dehydrogenase (decarboxylating) of Escherichia coli (strain K12 / MC4100 / BW2952).